Consider the following 459-residue polypeptide: ATP synthase subunit beta (459 aa).

An ATP-binding site is contributed by 147-154 (GGAGVGKT).

Belongs to the ATPase alpha/beta chains family. As to quaternary structure, F-type ATPases have 2 components, CF(1) - the catalytic core - and CF(0) - the membrane proton channel. CF(1) has five subunits: alpha(3), beta(3), gamma(1), delta(1), epsilon(1). CF(0) has three main subunits: a(1), b(2) and c(9-12). The alpha and beta chains form an alternating ring which encloses part of the gamma chain. CF(1) is attached to CF(0) by a central stalk formed by the gamma and epsilon chains, while a peripheral stalk is formed by the delta and b chains.

It localises to the cell inner membrane. The enzyme catalyses ATP + H2O + 4 H(+)(in) = ADP + phosphate + 5 H(+)(out). In terms of biological role, produces ATP from ADP in the presence of a proton gradient across the membrane. The catalytic sites are hosted primarily by the beta subunits. This Hydrogenovibrio crunogenus (strain DSM 25203 / XCL-2) (Thiomicrospira crunogena) protein is ATP synthase subunit beta.